The primary structure comprises 150 residues: Transthyretin (150 aa).

Residues 1-20 form the signal peptide; the sequence is MGSSSLLLVCLAGMVYLTEA. Cys33 is modified (sulfocysteine). Positions 38, 77, and 140 each coordinate L-thyroxine.

The protein belongs to the transthyretin family. Homotetramer. Dimer of dimers. In the homotetramer, subunits assemble around a central channel that can accommodate two ligand molecules. Interacts with RBP4. Post-translationally, sulfonation of the reactive cysteine Cys-33 enhances the stability of the native conformation of TTR, avoiding misassembly of the protein leading to amyloid formation. Detected in choroid plexus (at protein level). Detected in choroid plexus.

The protein resides in the secreted. Functionally, thyroid hormone-binding protein. Probably transports thyroxine from the bloodstream to the brain. The polypeptide is Transthyretin (TTR) (Tiliqua rugosa (Shingleback lizard)).